Reading from the N-terminus, the 201-residue chain is Acyl-homoserine-lactone synthase (201 aa).

The protein belongs to the autoinducer synthase family.

The enzyme catalyses a fatty acyl-[ACP] + S-adenosyl-L-methionine = an N-acyl-L-homoserine lactone + S-methyl-5'-thioadenosine + holo-[ACP] + H(+). Functionally, required for the synthesis of PAI consisting of 3-oxo-N-(tetrahydro-2-oxo-3-furanyl)-dodecanamide also known as N-(3-oxododecanoyl)homoserine lactone, an autoinducer molecule which binds to LasR and thus acts in elastase biosynthesis regulation. The polypeptide is Acyl-homoserine-lactone synthase (lasI) (Pseudomonas aeruginosa (strain ATCC 15692 / DSM 22644 / CIP 104116 / JCM 14847 / LMG 12228 / 1C / PRS 101 / PAO1)).